The primary structure comprises 530 residues: ATP synthase subunit alpha 3 (530 aa).

174 to 181 (GDRATGKT) contacts ATP. Positions 507–522 (TASATAPPDPPAASAA) are enriched in low complexity. Positions 507-530 (TASATAPPDPPAASAAELPQPDSP) are disordered.

Belongs to the ATPase alpha/beta chains family. As to quaternary structure, F-type ATPases have 2 components, CF(1) - the catalytic core - and CF(0) - the membrane proton channel. CF(1) has five subunits: alpha(3), beta(3), gamma(1), delta(1), epsilon(1). CF(0) has three main subunits: a(1), b(2) and c(9-12). The alpha and beta chains form an alternating ring which encloses part of the gamma chain. CF(1) is attached to CF(0) by a central stalk formed by the gamma and epsilon chains, while a peripheral stalk is formed by the delta and b chains.

Its subcellular location is the cell inner membrane. It carries out the reaction ATP + H2O + 4 H(+)(in) = ADP + phosphate + 5 H(+)(out). Its function is as follows. Produces ATP from ADP in the presence of a proton gradient across the membrane. The alpha chain is a regulatory subunit. The polypeptide is ATP synthase subunit alpha 3 (Paraburkholderia xenovorans (strain LB400)).